The following is an 812-amino-acid chain: ISWI one complex protein 2 (812 aa).

Disordered regions lie at residues 1–21 (MRTKRTRGTRNVGASMPAGAA), 614–646 (MGNSHGNRRSSRRPQSTLEPSTKSSRPTDKRKP), 679–704 (AKQRKQQEDRERRKKMKEEKKRLEEL), and 762–812 (QTGS…PPTN). A compositionally biased stretch (polar residues) spans 627 to 638 (PQSTLEPSTKSS). A coiled-coil region spans residues 673–714 (ELKIIRAKQRKQQEDRERRKKMKEEKKRLEELAKKRELTESV). Over residues 683-704 (KQQEDRERRKKMKEEKKRLEEL) the composition is skewed to basic and acidic residues. Residues 769 to 796 (PQAPQAPQTSQASIQPQQQQQQQQQQQP) show a composition bias toward low complexity.

Component of the ISW1B complex, which at least consists of ISW1, IOC2 and IOC4.

It is found in the nucleus. Functions as a component of the ISW1B complex, which acts in remodeling the chromatin by catalyzing an ATP-dependent alteration in the structure of nucleosomal DNA. The ISW1B complex acts within coding regions to control the amount of RNA polymerase II released into productive elongation and to coordinate elongation with termination and pre-mRNA processing. The polypeptide is ISWI one complex protein 2 (IOC2) (Saccharomyces cerevisiae (strain ATCC 204508 / S288c) (Baker's yeast)).